Here is an 861-residue protein sequence, read N- to C-terminus: Probable beta-glucosidase A (861 aa).

The N-terminal stretch at 1–19 (MKLSILEAAALTAASVVSA) is a signal peptide. N-linked (GlcNAc...) asparagine glycans are attached at residues asparagine 62, asparagine 212, and asparagine 253. The active site involves aspartate 281. N-linked (GlcNAc...) asparagine glycosylation is found at asparagine 316, asparagine 323, asparagine 355, asparagine 524, asparagine 543, asparagine 565, asparagine 669, and asparagine 713. A disordered region spans residues 735-754 (PEGATDGSPQPRLPASGGPG).

Belongs to the glycosyl hydrolase 3 family.

It is found in the secreted. It catalyses the reaction Hydrolysis of terminal, non-reducing beta-D-glucosyl residues with release of beta-D-glucose.. It functions in the pathway glycan metabolism; cellulose degradation. Beta-glucosidases are one of a number of cellulolytic enzymes involved in the degradation of cellulosic biomass. Catalyzes the last step releasing glucose from the inhibitory cellobiose. This Aspergillus terreus (strain NIH 2624 / FGSC A1156) protein is Probable beta-glucosidase A (bglA).